Reading from the N-terminus, the 219-residue chain is C-type lectin domain family 4 member E (219 aa).

The Cytoplasmic segment spans residues 1–19 (MNSSKSSETQCTERGCFSS). The chain crosses the membrane as a helical; Signal-anchor for type II membrane protein span at residues 20-40 (QMFLWTVAGIPILFLSACFIT). Topologically, residues 41–219 (RCVVTFRIFQ…INPLNKGKSL (179 aa)) are extracellular. A glycan (N-linked (GlcNAc...) asparagine) is linked at Asn-62. An intrachain disulfide couples Cys-80 to Cys-91. A C-type lectin domain is found at 87 to 206 (FQSSCYFFST…CFLNYFRICE (120 aa)). Asn-107 is a glycosylation site (N-linked (GlcNAc...) asparagine). 2 cysteine pairs are disulfide-bonded: Cys-108-Cys-205 and Cys-179-Cys-197. Val-117, Asn-119, Glu-123, Glu-169, Asn-171, Asn-193, Asp-194, and Glu-206 together coordinate Ca(2+). A Confers specificity for glucose/mannose-type carbohydrates motif is present at residues 169–171 (EPN).

In terms of assembly, monomer and homodimer. Interacts with signaling adapter Fc receptor gamma chain/FCER1G to form a functional complex; the interaction is direct. Alternatively, acts as a bridge for interaction between CLEC4D and FCER1G. A heterodimer of CLEC4E and CLEC4D associates with FCER1G to form a functional complex. Interacts with SAP130 nuclear protein that is released from necrotic cells; the interaction is direct. In terms of tissue distribution, expressed in monocytes and macrophages.

The protein localises to the cell membrane. It localises to the cell projection. It is found in the phagocytic cup. Calcium-dependent lectin that acts as a pattern recognition receptor (PRR) of the innate immune system: recognizes damage-associated molecular patterns (DAMPs) of abnormal self and pathogen-associated molecular patterns (PAMPs) of bacteria and fungi. The PAMPs notably include mycobacterial trehalose 6,6'-dimycolate (TDM), a cell wall glycolipid with potent adjuvant immunomodulatory functions. Interacts with signaling adapter Fc receptor gamma chain/FCER1G to form a functional complex in myeloid cells. Binding of mycobacterial trehalose 6,6'-dimycolate (TDM) to this receptor complex leads to phosphorylation of the immunoreceptor tyrosine-based activation motif (ITAM) of FCER1G, triggering activation of SYK, CARD9 and NF-kappa-B, consequently driving maturation of antigen-presenting cells and shaping antigen-specific priming of T-cells toward effector T-helper 1 and T-helper 17 cell subtypes. Also recognizes alpha-mannose residues on pathogenic fungi of the genus Malassezia and mediates macrophage activation. Through recognition of DAMPs released upon nonhomeostatic cell death, enables immune sensing of damaged self and promotes inflammatory cell infiltration into the damaged tissue. The polypeptide is C-type lectin domain family 4 member E (Homo sapiens (Human)).